The chain runs to 233 residues: Zinc import ATP-binding protein ZnuC (233 aa).

Residues 6–222 (IEFRNVSKKF…SEFSNALSAL (217 aa)) enclose the ABC transporter domain. 38 to 45 (GPNGAGKT) is a binding site for ATP.

Belongs to the ABC transporter superfamily. Zinc importer (TC 3.A.1.15.5) family. In terms of assembly, the complex is composed of two ATP-binding proteins (ZnuC), two transmembrane proteins (ZnuB) and a solute-binding protein (ZnuA).

The protein localises to the cell inner membrane. It catalyses the reaction Zn(2+)(out) + ATP(in) + H2O(in) = Zn(2+)(in) + ADP(in) + phosphate(in) + H(+)(in). Part of the ABC transporter complex ZnuABC involved in zinc import. Responsible for energy coupling to the transport system. In Rickettsia conorii (strain ATCC VR-613 / Malish 7), this protein is Zinc import ATP-binding protein ZnuC.